The chain runs to 442 residues: Endothelin receptor type B (442 aa).

The N-terminal stretch at 1 to 26 (MQSSASRCGRALVALLLACGLLGVWG) is a signal peptide. At 27-101 (EKRGFPPAQA…RKIEINKTFK (75 aa)) the chain is on the extracellular side. 2 N-linked (GlcNAc...) asparagine glycosylation sites follow: asparagine 60 and asparagine 97. Residues 102–126 (YINTIVSCLVFVLGIIGNSTLLRII) traverse the membrane as a helical segment. Topologically, residues 127–137 (YKNKCMRNGPN) are cytoplasmic. A helical membrane pass occupies residues 138 to 163 (ILIASLALGDLLHIIIDIPINAYKLL). Residues 164–175 (AGDWPFGAEMCK) are Extracellular-facing. A disulfide bridge links cysteine 174 with cysteine 255. The chain crosses the membrane as a helical span at residues 176 to 197 (LVPFIQKASVGITVLSLCALSI). Residues 198–218 (DRYRAVASWSRIKGIGVPKWT) lie on the Cytoplasmic side of the membrane. A helical membrane pass occupies residues 219–243 (AVEIVLIWVVSVVLAVPEAIGFDVI). Over 244–271 (TSDYKGKPLRVCMLNPFQKTAFMQFYKT) the chain is Extracellular. A helical transmembrane segment spans residues 272-296 (AKDWWLFSFYFCLPLAITAIFYTLM). The Cytoplasmic segment spans residues 297-324 (TCEMLRKKSGMQIALNDHLKQRREVAKT). Phosphoserine is present on serine 305. Residues 325 to 350 (VFCLVLVFALCWLPLHLSRILKLTLY) traverse the membrane as a helical segment. At 351-362 (DQSNPQRCELLS) the chain is on the extracellular side. A helical membrane pass occupies residues 363–389 (FLLVLDYIGINMASLNSCINPIALYLV). Residues 390-442 (SKRFKNCFKSCLCCWCQTFEEKQSLEEKQSCLKFKANDHGYDNFRSSNKYSSS) lie on the Cytoplasmic side of the membrane. Residues cysteine 402, cysteine 403, and cysteine 405 are each lipidated (S-palmitoyl cysteine). Serine 419 is modified (phosphoserine). The residue at position 439 (tyrosine 439) is a Phosphotyrosine. A phosphoserine mark is found at serine 440, serine 441, and serine 442.

This sequence belongs to the G-protein coupled receptor 1 family. Endothelin receptor subfamily. EDNRB sub-subfamily. Widely distributed in cell types of a variety of tissues.

The protein localises to the cell membrane. In terms of biological role, non-specific receptor for endothelin 1, 2, and 3. Mediates its action by association with G proteins that activate a phosphatidylinositol-calcium second messenger system. This chain is Endothelin receptor type B, found in Rattus norvegicus (Rat).